A 953-amino-acid chain; its full sequence is E3 ubiquitin-protein ligase ZNF598 (953 aa).

Residues 25–39 are compositionally biased toward basic residues; that stretch reads KPSKSTRIKPTKPHH. A disordered region spans residues 25–47; sequence KPSKSTRIKPTKPHHTPSNSMES. The RING-type zinc finger occupies 57–97; it reads CVLCCQDIDLFAVGKCDHPVCYRCSTKMRVLCEQKYCAVCR. The C2H2-type zinc finger occupies 215–238; sequence PLCKFCDDRYLDNDELLKHLRRDH. 2 disordered regions span residues 299–779 and 884–911; these read SKNR…EDSS and EKQQ…SSLD. The segment covering 371-380 has biased composition (low complexity); sequence AAAMRASMAS. Basic and acidic residues predominate over residues 381 to 409; the sequence is HQEERSHAQERSMLKPRREEKLEPDETRN. 2 stretches are compositionally biased toward polar residues: residues 410–431 and 467–483; these read NRST…NGSL and LSGS…YTNQ. Ser-489 is subject to Phosphoserine. 2 stretches are compositionally biased toward low complexity: residues 508-518 and 536-553; these read QSSAASAWSQA and MTPM…PLPS. Composition is skewed to polar residues over residues 555–564 and 641–650; these read SVPQPLTASS and LGSPSHTPET. Basic and acidic residues predominate over residues 655 to 666; sequence AHKENVPEKKPP. The span at 695–711 shows a compositional bias: polar residues; that stretch reads SCTSFPENITSSKQPVT. Residues 747 to 765 are compositionally biased toward pro residues; the sequence is LPPPPPPGLGPAVSKPPPG. A compositionally biased stretch (polar residues) spans 770–779; the sequence is PLNSNVEDSS.

It belongs to the ZNF598/HEL2 family.

The protein localises to the cytoplasm. It localises to the cytosol. The catalysed reaction is S-ubiquitinyl-[E2 ubiquitin-conjugating enzyme]-L-cysteine + [acceptor protein]-L-lysine = [E2 ubiquitin-conjugating enzyme]-L-cysteine + N(6)-ubiquitinyl-[acceptor protein]-L-lysine.. It participates in protein modification; protein ubiquitination. Functionally, E3 ubiquitin-protein ligase that plays a key role in the ribosome quality control (RQC), a pathway that takes place when a ribosome has stalled during translation, leading to degradation of nascent peptide chains. ZNF598 is activated when ribosomes are stalled within an mRNA following translation of prematurely polyadenylated mRNAs. Acts as a ribosome collision sensor: specifically recognizes and binds collided di-ribosome, which arises when a trailing ribosome encounters a slower leading ribosome, leading to terminally arrest translation. Following binding to colliding ribosomes, mediates monoubiquitination of 40S ribosomal proteins RPS10/eS10 and RPS3/uS3, and 'Lys-63'-linked polyubiquitination of RPS20/uS10. Polyubiquitination of RPS20/uS10 promotes recruitment of the RQT (ribosome quality control trigger) complex, which drives the disassembly of stalled ribosomes, followed by degradation of nascent peptides. In Danio rerio (Zebrafish), this protein is E3 ubiquitin-protein ligase ZNF598.